A 401-amino-acid polypeptide reads, in one-letter code: Tyrosine--tRNA ligase (401 aa).

Residues 45-54 carry the 'HIGH' region motif; the sequence is PTAPDLHLGH. Residues 230 to 234 carry the 'KMSKS' region motif; the sequence is KMSKS. Lys233 provides a ligand contact to ATP. In terms of domain architecture, S4 RNA-binding spans 339 to 399; sequence IWLAKALVEC…GKRKFAKLKV (61 aa).

It belongs to the class-I aminoacyl-tRNA synthetase family. TyrS type 2 subfamily. Homodimer.

It localises to the cytoplasm. It carries out the reaction tRNA(Tyr) + L-tyrosine + ATP = L-tyrosyl-tRNA(Tyr) + AMP + diphosphate + H(+). Catalyzes the attachment of tyrosine to tRNA(Tyr) in a two-step reaction: tyrosine is first activated by ATP to form Tyr-AMP and then transferred to the acceptor end of tRNA(Tyr). This Campylobacter jejuni (strain RM1221) protein is Tyrosine--tRNA ligase.